Consider the following 417-residue polypeptide: Arginine biosynthesis bifunctional protein ArgJ (417 aa).

Substrate contacts are provided by Thr162, Lys188, Thr199, Glu289, Asn412, and Ser417. The active-site Nucleophile is the Thr199.

This sequence belongs to the ArgJ family. As to quaternary structure, heterotetramer of two alpha and two beta chains.

The protein resides in the cytoplasm. It catalyses the reaction N(2)-acetyl-L-ornithine + L-glutamate = N-acetyl-L-glutamate + L-ornithine. The catalysed reaction is L-glutamate + acetyl-CoA = N-acetyl-L-glutamate + CoA + H(+). Its pathway is amino-acid biosynthesis; L-arginine biosynthesis; L-ornithine and N-acetyl-L-glutamate from L-glutamate and N(2)-acetyl-L-ornithine (cyclic): step 1/1. The protein operates within amino-acid biosynthesis; L-arginine biosynthesis; N(2)-acetyl-L-ornithine from L-glutamate: step 1/4. Functionally, catalyzes two activities which are involved in the cyclic version of arginine biosynthesis: the synthesis of N-acetylglutamate from glutamate and acetyl-CoA as the acetyl donor, and of ornithine by transacetylation between N(2)-acetylornithine and glutamate. The sequence is that of Arginine biosynthesis bifunctional protein ArgJ from Nitrobacter winogradskyi (strain ATCC 25391 / DSM 10237 / CIP 104748 / NCIMB 11846 / Nb-255).